Reading from the N-terminus, the 108-residue chain is FK506-binding protein 1A (108 aa).

The segment at 1–20 is disordered; it reads MGVEVQRISPGDGKNFPKPG. The region spanning 20–108 is the PPIase FKBP-type domain; it reads GDTVSIHYTG…TFEVELLKIN (89 aa).

Belongs to the FKBP-type PPIase family. FKBP1 subfamily.

It is found in the cytoplasm. It carries out the reaction [protein]-peptidylproline (omega=180) = [protein]-peptidylproline (omega=0). Inhibited by both FK506 and rapamycin. In terms of biological role, PPIases accelerate the folding of proteins. It catalyzes the cis-trans isomerization of proline imidic peptide bonds in oligopeptides. The chain is FK506-binding protein 1A (fprA) from Emericella nidulans (strain FGSC A4 / ATCC 38163 / CBS 112.46 / NRRL 194 / M139) (Aspergillus nidulans).